The primary structure comprises 52 residues: Light-harvesting protein B800/830/1020 alpha-1 chain (52 aa).

Topologically, residues 1 to 12 (MWRIWKVFDPRR) are cytoplasmic. The chain crosses the membrane as a helical span at residues 13–33 (ILIATAIWLIIIALTIHVILM). Residue H29 participates in a bacteriochlorophyll binding. Topologically, residues 34–52 (TTERFNWLEGAPAAEYYSS) are periplasmic.

The protein belongs to the antenna complex alpha subunit family. As to quaternary structure, the core complex is formed by different alpha and beta chains, binding bacteriochlorophyll molecules, and arranged most probably in tetrameric structures disposed around the reaction center. The non-pigmented gamma chains may constitute additional components.

It is found in the cell inner membrane. In terms of biological role, antenna complexes are light-harvesting systems, which transfer the excitation energy to the reaction centers. The chain is Light-harvesting protein B800/830/1020 alpha-1 chain from Halorhodospira halochloris (Ectothiorhodospira halochloris).